Here is a 418-residue protein sequence, read N- to C-terminus: Serpin H1 (418 aa).

The signal sequence occupies residues M1–A18. An N6-succinyllysine modification is found at K94. N120 and N125 each carry an N-linked (GlcNAc...) asparagine glycan. S141 carries the phosphoserine modification. K207 carries the post-translational modification N6-acetyllysine. The residue at position 296 (K296) is an N6-succinyllysine. An N6-acetyllysine modification is found at K319. The short motif at R415–L418 is the Prevents secretion from ER element.

Belongs to the serpin family.

The protein resides in the endoplasmic reticulum lumen. Its function is as follows. Binds specifically to collagen. Could be involved as a chaperone in the biosynthetic pathway of collagen. In Bos taurus (Bovine), this protein is Serpin H1 (SERPINH1).